The primary structure comprises 90 residues: DNA-binding protein HU-beta (90 aa).

This sequence belongs to the bacterial histone-like protein family. As to quaternary structure, heterodimer of an alpha and a beta chain.

Its function is as follows. Histone-like DNA-binding protein which is capable of wrapping DNA to stabilize it, and thus to prevent its denaturation under extreme environmental conditions. The sequence is that of DNA-binding protein HU-beta (hupB) from Serratia marcescens.